A 182-amino-acid chain; its full sequence is Meiotic recombination protein REC104 (182 aa).

Interacts with REC114 and SPO11.

Potential transcriptional regulator that is required to activate expression of a number of early meiotic genes including HOP1. The chain is Meiotic recombination protein REC104 (REC104) from Saccharomyces cerevisiae (strain ATCC 204508 / S288c) (Baker's yeast).